The primary structure comprises 310 residues: Probable cell division protein WhiA (310 aa).

Positions 277-310 form a DNA-binding region, H-T-H motif; the sequence is SLKELAEQVPDGPISKSGVNHRLKKLHEIAENLR.

Belongs to the WhiA family.

Its function is as follows. Involved in cell division and chromosome segregation. The polypeptide is Probable cell division protein WhiA (Lactobacillus delbrueckii subsp. bulgaricus (strain ATCC 11842 / DSM 20081 / BCRC 10696 / JCM 1002 / NBRC 13953 / NCIMB 11778 / NCTC 12712 / WDCM 00102 / Lb 14)).